Here is a 431-residue protein sequence, read N- to C-terminus: Lipid storage droplets surface-binding protein 1 (431 aa).

A disordered region spans residues 397–431 (KVTGSDGGNSNHRSSRRRQDPNHYSATHNNINGVY). Residues 418–431 (NHYSATHNNINGVY) are compositionally biased toward polar residues.

This sequence belongs to the perilipin family.

Its subcellular location is the cytoplasm. It is found in the lipid droplet. Functionally, required for normal deposition of neutral lipids in the oocyte. This chain is Lipid storage droplets surface-binding protein 1, found in Drosophila melanogaster (Fruit fly).